A 334-amino-acid polypeptide reads, in one-letter code: D-fructose 1,6-bisphosphatase class 2/sedoheptulose 1,7-bisphosphatase (334 aa).

Mn(2+) is bound by residues Asp33, Glu57, Asp85, and Glu88. Residues 88-90, Tyr119, 164-166, and 186-188 contribute to the substrate site; these read EGT, RAR, and DGD. A Mn(2+)-binding site is contributed by Glu213.

Belongs to the FBPase class 2 family. Homotetramer. It depends on Mn(2+) as a cofactor.

The catalysed reaction is beta-D-fructose 1,6-bisphosphate + H2O = beta-D-fructose 6-phosphate + phosphate. It carries out the reaction D-sedoheptulose 1,7-bisphosphate + H2O = D-sedoheptulose 7-phosphate + phosphate. The protein operates within carbohydrate biosynthesis; Calvin cycle. Its function is as follows. Catalyzes the hydrolysis of fructose 1,6-bisphosphate (Fru 1,6-P2) and sedoheptulose 1,7-bisphosphate (Sed 1,7-P2) to fructose 6-phosphate and sedoheptulose 7-phosphate, respectively. This chain is D-fructose 1,6-bisphosphatase class 2/sedoheptulose 1,7-bisphosphatase, found in Synechococcus sp. (strain CC9605).